The sequence spans 493 residues: Probable cytochrome P450 6a13 (493 aa).

Cys435 is a heme binding site.

Belongs to the cytochrome P450 family. It depends on heme as a cofactor.

Its subcellular location is the endoplasmic reticulum membrane. It localises to the microsome membrane. In terms of biological role, may be involved in the metabolism of insect hormones and in the breakdown of synthetic insecticides. The protein is Probable cytochrome P450 6a13 (Cyp6a13) of Drosophila melanogaster (Fruit fly).